We begin with the raw amino-acid sequence, 486 residues long: O-methyltransferase gedA (486 aa).

S-adenosyl-L-methionine is bound by residues 298–299 (GG), Asp321, 353–354 (SF), and Arg369. The Proton acceptor role is filled by His373.

The protein belongs to the class I-like SAM-binding methyltransferase superfamily. Cation-independent O-methyltransferase family.

It carries out the reaction emodin + S-adenosyl-L-methionine = questin + S-adenosyl-L-homocysteine + H(+). It participates in secondary metabolite biosynthesis. Its function is as follows. O-methyltransferase; part of the gene cluster that mediates the biosynthesis of geodin, an intermediate in the biosynthesis of other natural products. The pathway begins with the synthesis of atrochrysone thioester by the polyketide synthase (PKS) gedC. The atrochrysone carboxyl ACP thioesterase gedB then breaks the thioester bond and releases the atrochrysone carboxylic acid from gedC. The atrochrysone carboxylic acid is then converted to atrochrysone which is further transformed into emodinanthrone. The next step is performed by the emodinanthrone oxygenase gedH that catalyzes the oxidation of emodinanthrone to emodin. Emodin O-methyltransferase encoded probably by gedA then catalyzes methylation of the 8-hydroxy group of emodin to form questin. Ring cleavage of questin by questin oxidase gedK leads to desmethylsulochrin via several intermediates including questin epoxide. Another methylation step probably catalyzed by methyltransferase gedG leads to the formation of sulochrin which is further converted to dihydrogeodin by the sulochrin halogenase gedL. Finally, the dihydrogeodin oxidase gedJ catalyzes the stereospecific phenol oxidative coupling reaction converting dihydrogeodin to geodin. This chain is O-methyltransferase gedA, found in Aspergillus terreus (strain NIH 2624 / FGSC A1156).